We begin with the raw amino-acid sequence, 403 residues long: Argininosuccinate synthase 1 (403 aa).

ATP contacts are provided by residues 10 to 18 and alanine 37; that span reads SYSGGLDTS. L-citrulline-binding residues include tyrosine 88 and serine 93. Residue glycine 118 coordinates ATP. The L-aspartate site is built by threonine 120, asparagine 124, and aspartate 125. Residue asparagine 124 participates in L-citrulline binding. 5 residues coordinate L-citrulline: arginine 128, serine 179, serine 188, glutamate 264, and tyrosine 276.

Belongs to the argininosuccinate synthase family. Type 1 subfamily. In terms of assembly, homotetramer.

The protein resides in the cytoplasm. It carries out the reaction L-citrulline + L-aspartate + ATP = 2-(N(omega)-L-arginino)succinate + AMP + diphosphate + H(+). The protein operates within amino-acid biosynthesis; L-arginine biosynthesis; L-arginine from L-ornithine and carbamoyl phosphate: step 2/3. The protein is Argininosuccinate synthase 1 of Rhizobium johnstonii (strain DSM 114642 / LMG 32736 / 3841) (Rhizobium leguminosarum bv. viciae).